The following is a 171-amino-acid chain: uncharacterized protein (171 aa).

Belongs to the HHV-5 UL128 protein family. As to quaternary structure, forms the envelope pentamer complex (PC) composed of gH, gL, UL128, UL130, and UL131A. The pentamer interacts with host NRP2.

It localises to the virion membrane. Functionally, plays a role in viral entry into host cells. Forms a pentameric complex at the surface of the viral envelope together with gH, gL, UL130 and UL131. This complex is required for entry in epithelial, endothelial and myeloid host cells. Mechanistically, engages host receptor(s) including neurophilin 2/NRP2 to mediate infection. Additionally, monomeric UL128 may interfere with certain inflammatory cytokines to increase infection and dissemination by blocking monocytes migration. This is an uncharacterized protein from Human cytomegalovirus (strain AD169) (HHV-5).